The primary structure comprises 244 residues: Phosphoadenosine 5'-phosphosulfate reductase (244 aa).

Cys239 serves as the catalytic Nucleophile; cysteine thiosulfonate intermediate.

The protein belongs to the PAPS reductase family. CysH subfamily.

It is found in the cytoplasm. It catalyses the reaction [thioredoxin]-disulfide + sulfite + adenosine 3',5'-bisphosphate + 2 H(+) = [thioredoxin]-dithiol + 3'-phosphoadenylyl sulfate. It functions in the pathway sulfur metabolism; hydrogen sulfide biosynthesis; sulfite from sulfate: step 3/3. Its function is as follows. Catalyzes the formation of sulfite from phosphoadenosine 5'-phosphosulfate (PAPS) using thioredoxin as an electron donor. The polypeptide is Phosphoadenosine 5'-phosphosulfate reductase (Klebsiella pneumoniae (strain 342)).